A 134-amino-acid chain; its full sequence is Small ribosomal subunit protein uS11 (134 aa).

This sequence belongs to the universal ribosomal protein uS11 family. In terms of assembly, part of the 30S ribosomal subunit. Interacts with proteins S7 and S18. Binds to IF-3.

Its function is as follows. Located on the platform of the 30S subunit, it bridges several disparate RNA helices of the 16S rRNA. Forms part of the Shine-Dalgarno cleft in the 70S ribosome. This is Small ribosomal subunit protein uS11 from Janthinobacterium sp. (strain Marseille) (Minibacterium massiliensis).